A 208-amino-acid polypeptide reads, in one-letter code: V-type ATP synthase subunit D (208 aa).

This sequence belongs to the V-ATPase D subunit family.

Produces ATP from ADP in the presence of a proton gradient across the membrane. This is V-type ATP synthase subunit D from Chlamydia abortus (strain DSM 27085 / S26/3) (Chlamydophila abortus).